The chain runs to 787 residues: Glycine-rich domain-containing protein 2 (787 aa).

Expressed in leaves, inflorescences, buds, flowers and immature siliques.

Functionally, involved in development and stress responses, probably through an auxin-dependent mechanism. The protein is Glycine-rich domain-containing protein 2 of Arabidopsis thaliana (Mouse-ear cress).